Reading from the N-terminus, the 352-residue chain is S-adenosylmethionine:tRNA ribosyltransferase-isomerase (352 aa).

Belongs to the QueA family. In terms of assembly, monomer.

The protein localises to the cytoplasm. It catalyses the reaction 7-aminomethyl-7-carbaguanosine(34) in tRNA + S-adenosyl-L-methionine = epoxyqueuosine(34) in tRNA + adenine + L-methionine + 2 H(+). The protein operates within tRNA modification; tRNA-queuosine biosynthesis. Transfers and isomerizes the ribose moiety from AdoMet to the 7-aminomethyl group of 7-deazaguanine (preQ1-tRNA) to give epoxyqueuosine (oQ-tRNA). The chain is S-adenosylmethionine:tRNA ribosyltransferase-isomerase from Solibacter usitatus (strain Ellin6076).